The following is a 382-amino-acid chain: Histidinol-phosphate aminotransferase (382 aa).

N6-(pyridoxal phosphate)lysine is present on K215. Residues 360 to 382 (NSNNIDNQSKTHSQTSSIRKGTI) are disordered.

The protein belongs to the class-II pyridoxal-phosphate-dependent aminotransferase family. Histidinol-phosphate aminotransferase subfamily. In terms of assembly, homodimer. It depends on pyridoxal 5'-phosphate as a cofactor.

It carries out the reaction L-histidinol phosphate + 2-oxoglutarate = 3-(imidazol-4-yl)-2-oxopropyl phosphate + L-glutamate. The protein operates within amino-acid biosynthesis; L-histidine biosynthesis; L-histidine from 5-phospho-alpha-D-ribose 1-diphosphate: step 7/9. This chain is Histidinol-phosphate aminotransferase, found in Yersinia pseudotuberculosis serotype IB (strain PB1/+).